The sequence spans 96 residues: (4S)-4-hydroxy-5-phosphonooxypentane-2,3-dione isomerase (96 aa).

The ABM domain maps to 2 to 91; the sequence is HVTLVEINVK…MTGPRKKTTF (90 aa).

This sequence belongs to the LsrG family. As to quaternary structure, homodimer.

The protein resides in the cytoplasm. It catalyses the reaction (2S)-2-hydroxy-3,4-dioxopentyl phosphate = 3-hydroxy-2,4-dioxopentyl phosphate. Functionally, involved in the degradation of phospho-AI-2, thereby terminating induction of the lsr operon and closing the AI-2 signaling cycle. Catalyzes the conversion of (4S)-4-hydroxy-5-phosphonooxypentane-2,3-dione (P-DPD) to 3-hydroxy-5-phosphonooxypentane-2,4-dione (P-HPD). In Yersinia enterocolitica serotype O:8 / biotype 1B (strain NCTC 13174 / 8081), this protein is (4S)-4-hydroxy-5-phosphonooxypentane-2,3-dione isomerase.